Here is a 393-residue protein sequence, read N- to C-terminus: Elongation factor Tu (393 aa).

Residues 10–203 (KPHVNIGTIG…AVDNYIPTPV (194 aa)) form the tr-type G domain. The tract at residues 19–26 (GHVDHGKT) is G1. Residue 19 to 26 (GHVDHGKT) participates in GTP binding. Thr-26 contributes to the Mg(2+) binding site. Positions 60–64 (GITIS) are G2. Residues 81–84 (DCPG) are G3. Residues 81 to 85 (DCPGH) and 136 to 139 (NKVD) contribute to the GTP site. A G4 region spans residues 136-139 (NKVD). The interval 173–175 (SAL) is G5.

The protein belongs to the TRAFAC class translation factor GTPase superfamily. Classic translation factor GTPase family. EF-Tu/EF-1A subfamily. In terms of assembly, monomer.

Its subcellular location is the cytoplasm. It carries out the reaction GTP + H2O = GDP + phosphate + H(+). In terms of biological role, GTP hydrolase that promotes the GTP-dependent binding of aminoacyl-tRNA to the A-site of ribosomes during protein biosynthesis. The sequence is that of Elongation factor Tu from Chloroherpeton thalassium (strain ATCC 35110 / GB-78).